Consider the following 360-residue polypeptide: DNA replication and repair protein RecF (360 aa).

30 to 37 contacts ATP; the sequence is GQNGSGKT.

This sequence belongs to the RecF family.

Its subcellular location is the cytoplasm. Its function is as follows. The RecF protein is involved in DNA metabolism; it is required for DNA replication and normal SOS inducibility. RecF binds preferentially to single-stranded, linear DNA. It also seems to bind ATP. The protein is DNA replication and repair protein RecF of Shewanella baltica (strain OS155 / ATCC BAA-1091).